The primary structure comprises 184 residues: Holliday junction branch migration complex subunit RuvA (184 aa).

Residues 1–64 are domain I; sequence MIVAVEGIIT…EDADLLYGFL (64 aa). The segment at 65–145 is domain II; it reads DEKEKRMFEM…ANDGEQYKIE (81 aa). Residue glutamate 145 is a region of interest, flexible linker. Residues 145-184 form a domain III region; sequence ETISALENLGFKRDKINKILLNCKSTNTADLIKEALKKLA.

The protein belongs to the RuvA family. In terms of assembly, homotetramer. Forms an RuvA(8)-RuvB(12)-Holliday junction (HJ) complex. HJ DNA is sandwiched between 2 RuvA tetramers; dsDNA enters through RuvA and exits via RuvB. An RuvB hexamer assembles on each DNA strand where it exits the tetramer. Each RuvB hexamer is contacted by two RuvA subunits (via domain III) on 2 adjacent RuvB subunits; this complex drives branch migration. In the full resolvosome a probable DNA-RuvA(4)-RuvB(12)-RuvC(2) complex forms which resolves the HJ.

Its subcellular location is the cytoplasm. Its function is as follows. The RuvA-RuvB-RuvC complex processes Holliday junction (HJ) DNA during genetic recombination and DNA repair, while the RuvA-RuvB complex plays an important role in the rescue of blocked DNA replication forks via replication fork reversal (RFR). RuvA specifically binds to HJ cruciform DNA, conferring on it an open structure. The RuvB hexamer acts as an ATP-dependent pump, pulling dsDNA into and through the RuvAB complex. HJ branch migration allows RuvC to scan DNA until it finds its consensus sequence, where it cleaves and resolves the cruciform DNA. In Campylobacter hominis (strain ATCC BAA-381 / DSM 21671 / CCUG 45161 / LMG 19568 / NCTC 13146 / CH001A), this protein is Holliday junction branch migration complex subunit RuvA.